A 155-amino-acid chain; its full sequence is Ribosome maturation factor RimP (155 aa).

The protein belongs to the RimP family.

It is found in the cytoplasm. Its function is as follows. Required for maturation of 30S ribosomal subunits. In Listeria welshimeri serovar 6b (strain ATCC 35897 / DSM 20650 / CCUG 15529 / CIP 8149 / NCTC 11857 / SLCC 5334 / V8), this protein is Ribosome maturation factor RimP.